Here is a 701-residue protein sequence, read N- to C-terminus: Kinesin-like protein KIN-10C (701 aa).

Residues 8–318 enclose the Kinesin motor domain; the sequence is VVRVVARVKP…LNLASRICLG (311 aa). Residue 94–101 coordinates ATP; it reads GARNSGKT.

This sequence belongs to the TRAFAC class myosin-kinesin ATPase superfamily. Kinesin family. KIN-10 subfamily.

The sequence is that of Kinesin-like protein KIN-10C from Arabidopsis thaliana (Mouse-ear cress).